The sequence spans 850 residues: MLKLPKGLKKKKKKSKKDQELFTEEELEQYKRDLKAKQEAAATKSDAGESDGASSDVEAHHEPVAFNSGLGSGSSSSILNAQQQLSDQNQGAAGGDEEWAKFKALTSGVDSILHKTQDELDRIKKESFYQRLPSAAEKKKQKEEEAARLEAEQQEREKQRLGQIEAQRDKLAEAVVQLSESEEEAGDYEADDIFATDYIEAITSGELQLAVVPDSPVLAEDGPDPFDTAYAEKVIVGADRAKGNKKLVSLGAAVEVLSGRVDREHAVALANPKRKLRKGIQNLLLSESIELADSEAELLAATSNAEPQHNLLDDLDEELSESSVPIDLSVSLHLHLIKHKQPVEEEEELEQKGRENQLLNPDLSEFDSLKDEEDDEFAELAAESLTKKEEVTVVSQVVLPVAQLPTEAFEAGSWAEFEEQSGQEPGKPKRPPPPVRPPTGPHIVPGAIYVSEDEEENPEDDPFNTNYAEQVIKKTTVLEEDDDFDPRAEEHATEPPFLAAPQRDLLAGSATDLSQVVPAPLAPTLSVDQEAEDFDPFDTSAVSALVQPKSTELRFLERELLNYSGLDGVTLKHSLSDQDFDPRADQKEPAAPQVKLEQKETDFDTAQRKSSLSLNIQAKSVGFLVPASDLLGAGNELGASKKPLTPYYAPSDNRLQEREREAEDVDPFDTSHVPEAKLSDIELKHIEKDLISVPANLRHSLSDPDFDPRAPPTPVPAEVLLAVEENINIKVLTPAQDRKKLTNSGGSGKSEEDIDPFDTSIAANLQPGQTELKLLENELLPETKTLVTDVLDVQSDAQELGLGDKVLTPSTHSRPSLPAQDIDPFDTSIAENLAPGEAEIKLLESELIER.

Residues 1 to 16 show a composition bias toward basic residues; the sequence is MLKLPKGLKKKKKKSK. Disordered regions lie at residues 1-95 and 125-164; these read MLKL…AAGG and KESFYQRLPSAAEKKKQKEEEAARLEAEQQEREKQRLGQI. The tract at residues 26–290 is interaction with Syt; it reads ELEQYKRDLK…QNLLLSESIE (265 aa). Basic and acidic residues predominate over residues 28–38; that stretch reads EQYKRDLKAKQ. Residues 78–91 show a composition bias toward polar residues; it reads ILNAQQQLSDQNQG. Basic and acidic residues predominate over residues 136-164; that stretch reads AEKKKQKEEEAARLEAEQQEREKQRLGQI. The short motif at 224-226 is the DPF 1 element; the sequence is DPF. Disordered regions lie at residues 345–375 and 412–498; these read EEEELEQKGRENQLLNPDLSEFDSLKDEEDD and GSWA…PPFL. A compositionally biased stretch (pro residues) spans 431 to 440; the sequence is PPPPVRPPTG. Positions 451 to 462 are enriched in acidic residues; sequence SEDEEENPEDDP. Short sequence motifs (DPF) lie at residues 461 to 463 and 535 to 537; these read DPF. Disordered stretches follow at residues 573–610, 634–673, 738–760, and 800–825; these read HSLSDQDFDPRADQKEPAAPQVKLEQKETDFDTAQRKS, GNELGASKKPLTPYYAPSDNRLQEREREAEDVDPFDTSHV, RKKLTNSGGSGKSEEDIDPFDTS, and LGLGDKVLTPSTHSRPSLPAQDIDPF. Basic and acidic residues-rich tracts occupy residues 574-588 and 596-607; these read SLSDQDFDPRADQKE and LEQKETDFDTAQ. 3 consecutive short sequence motifs (DPF) follow at residues 666-668, 755-757, and 823-825; these read DPF.

Interacts with the second C2 domain of Syt.

Its subcellular location is the cytoplasm. The protein localises to the synapse. The protein resides in the cytoplasmic vesicle. It localises to the secretory vesicle. It is found in the synaptic vesicle. Functionally, adapter protein involved in endocytic recycling of synaptic vesicles membranes. May act by mediating the retrieval of synaptotagmin protein Syt from the plasma membrane, thereby facilitating the internalization of multiple synaptic vesicles from the plasma membrane. In Drosophila melanogaster (Fruit fly), this protein is Protein stoned-A (stnA).